Here is a 365-residue protein sequence, read N- to C-terminus: Aspartate-semialdehyde dehydrogenase (365 aa).

NADP(+) is bound by residues Thr-13, Gly-14, Ser-15, Val-16, Ser-38, Ser-41, Leu-85, and Asp-86. A Phosphothreonine modification is found at Thr-13. The active-site Acyl-thioester intermediate is Cys-156. NADP(+) is bound at residue Gly-188. His-256 serves as the catalytic Proton acceptor. Phosphoserine occurs at positions 318 and 323. Residue Asn-343 participates in NADP(+) binding.

It belongs to the aspartate-semialdehyde dehydrogenase family. Homotetramer.

It localises to the cytoplasm. Its subcellular location is the cytosol. The protein localises to the nucleus. The enzyme catalyses L-aspartate 4-semialdehyde + phosphate + NADP(+) = 4-phospho-L-aspartate + NADPH + H(+). The protein operates within amino-acid biosynthesis; L-methionine biosynthesis via de novo pathway; L-homoserine from L-aspartate: step 2/3. It functions in the pathway amino-acid biosynthesis; L-threonine biosynthesis; L-threonine from L-aspartate: step 2/5. In terms of biological role, catalyzes the NADPH-dependent formation of L-aspartate 4-semialdehyde (L-ASA) by the reductive dephosphorylation of 4-phospho-L-aspartate. Mediates the second step in the biosynthesis of amino acids that derive from aspartate (the aspartate family of amino acids), including methioinine and threonine, the latter of which is a precursor to isoleucine. In Saccharomyces cerevisiae (strain ATCC 204508 / S288c) (Baker's yeast), this protein is Aspartate-semialdehyde dehydrogenase (HOM2).